The following is a 742-amino-acid chain: Cullin-2 (742 aa).

Positions 672-734 constitute a Cullin neddylation domain; the sequence is DRRYAIDAAL…RDYLERDTDN (63 aa). Lysine 686 participates in a covalent cross-link: Glycyl lysine isopeptide (Lys-Gly) (interchain with G-Cter in NEDD8).

The protein belongs to the cullin family. Interacts with SKIP17 and FBW2/SKIP18. In terms of processing, neddylated; which enhances the ubiquitination activity of E3 ubiquitin-protein ligase complexes.

In terms of biological role, core component of multiple SCF (SKP1-CUL1-F-box protein) E3 ubiquitin-protein ligase complexes. Involved in ubiquitination and subsequent proteasomal degradation of target proteins. In Arabidopsis thaliana (Mouse-ear cress), this protein is Cullin-2 (CUL2).